The chain runs to 230 residues: Ribonuclease HII (230 aa).

In terms of domain architecture, RNase H type-2 spans 1 to 224; sequence MIIIGIDEAG…CKRILDKSKQ (224 aa). A divalent metal cation-binding residues include D7, E8, and D112.

The protein belongs to the RNase HII family. The cofactor is Mn(2+). Requires Mg(2+) as cofactor.

It is found in the cytoplasm. The enzyme catalyses Endonucleolytic cleavage to 5'-phosphomonoester.. Its function is as follows. Endonuclease that specifically degrades the RNA of RNA-DNA hybrids. In Methanocaldococcus jannaschii (strain ATCC 43067 / DSM 2661 / JAL-1 / JCM 10045 / NBRC 100440) (Methanococcus jannaschii), this protein is Ribonuclease HII (rnhB).